The following is a 286-amino-acid chain: Ferric acinetobactin reductase (286 aa).

Residues 25 to 131 enclose the FAD-binding FR-type domain; it reads MEQLEMTIVS…IGPRPHFIPN (107 aa). Residues R79, V80, T82, D96, V98, H100, D102, S104, A106, R250, G252, and S255 each contribute to the FAD site.

The protein belongs to the SIP oxidoreductase family. As to quaternary structure, monomer in solution. Requires FAD as cofactor.

It carries out the reaction 2 a Fe(II)-siderophore + NAD(+) + H(+) = 2 a Fe(III)-siderophore + NADH. It catalyses the reaction 2 a Fe(II)-siderophore + NADP(+) + H(+) = 2 a Fe(III)-siderophore + NADPH. Its function is as follows. Ferric-siderophore reductase involved in iron removal from the siderophores after their transport into the cell. Interacts with the siderophores acinetobactin (Acb) and preacinetobactin (pre-Acb) and catalyzes the reduction of the ferric iron bound to the siderophores to ferrous iron, resulting in destabilization of the siderophore chelation complex and entrance of ferrous iron into the intracellular pool of bioavailable metals. Can use NADH and NADPH as electron donors in vitro, but the reduction rate is very slow, suggesting that NADH and NADPH are not the physiological partners of BauF. This chain is Ferric acinetobactin reductase, found in Acinetobacter baumannii.